Consider the following 124-residue polypeptide: Small ribosomal subunit protein uS13 (124 aa).

Positions 92-117 (RRGLPVRGQRTKSNARTRKGPRKTVA) are enriched in basic residues. Positions 92–124 (RRGLPVRGQRTKSNARTRKGPRKTVANKKIESK) are disordered.

This sequence belongs to the universal ribosomal protein uS13 family. As to quaternary structure, part of the 30S ribosomal subunit. Forms a loose heterodimer with protein S19. Forms two bridges to the 50S subunit in the 70S ribosome.

Its function is as follows. Located at the top of the head of the 30S subunit, it contacts several helices of the 16S rRNA. In the 70S ribosome it contacts the 23S rRNA (bridge B1a) and protein L5 of the 50S subunit (bridge B1b), connecting the 2 subunits; these bridges are implicated in subunit movement. Contacts the tRNAs in the A and P-sites. The sequence is that of Small ribosomal subunit protein uS13 from Mycoplasmoides gallisepticum (strain R(low / passage 15 / clone 2)) (Mycoplasma gallisepticum).